We begin with the raw amino-acid sequence, 469 residues long: Light-independent protochlorophyllide reductase subunit N (469 aa).

Cysteine 24, cysteine 49, and cysteine 109 together coordinate [4Fe-4S] cluster.

This sequence belongs to the BchN/ChlN family. As to quaternary structure, protochlorophyllide reductase is composed of three subunits; ChlL, ChlN and ChlB. Forms a heterotetramer of two ChlB and two ChlN subunits. [4Fe-4S] cluster serves as cofactor.

The catalysed reaction is chlorophyllide a + oxidized 2[4Fe-4S]-[ferredoxin] + 2 ADP + 2 phosphate = protochlorophyllide a + reduced 2[4Fe-4S]-[ferredoxin] + 2 ATP + 2 H2O. Its pathway is porphyrin-containing compound metabolism; chlorophyll biosynthesis (light-independent). In terms of biological role, component of the dark-operative protochlorophyllide reductase (DPOR) that uses Mg-ATP and reduced ferredoxin to reduce ring D of protochlorophyllide (Pchlide) to form chlorophyllide a (Chlide). This reaction is light-independent. The NB-protein (ChlN-ChlB) is the catalytic component of the complex. This chain is Light-independent protochlorophyllide reductase subunit N, found in Synechocystis sp. (strain ATCC 27184 / PCC 6803 / Kazusa).